We begin with the raw amino-acid sequence, 486 residues long: Cobyric acid synthase (486 aa).

The GATase cobBQ-type domain maps to 248–439 (VLRIVVPALP…LHGLFDTPHA (192 aa)). Residue C328 is the Nucleophile of the active site. H431 is an active-site residue.

The protein belongs to the CobB/CobQ family. CobQ subfamily.

The protein operates within cofactor biosynthesis; adenosylcobalamin biosynthesis. Its function is as follows. Catalyzes amidations at positions B, D, E, and G on adenosylcobyrinic A,C-diamide. NH(2) groups are provided by glutamine, and one molecule of ATP is hydrogenolyzed for each amidation. This chain is Cobyric acid synthase, found in Burkholderia mallei (strain ATCC 23344).